Consider the following 445-residue polypeptide: MKPVIALVGRPNVGKSTLFNRLTRTRDALVADLPGLTRDRHYGEGRAGDRPYLVVDTGGFEPVAKDGILHEMARQTRQAVEESDIVVFIVDGRNGLAPQDKSIADYLRKVGRPIFLVVNKAEGMKYSNVAADFYELGLGDPRAISAAHGDGVTEMINEALEVAYAGQPEESDEEKQTRGVKIAIVGRPNVGKSTLINALVGEERVIAFDMPGTTRDSIYVDFERGGKPYTLIDTAGLRRRGKVFEAIEKFSVVKTLQSISDANVVILLLDARQDISEQDAHIAGFVVEQGRALVVGVNKWDGLDPHVRERTKADLERKLKFLDFAKFHFISAAEKTGIGPLMRSVDDAYAAAMAKLPTPKLTRALIDAVEFQQPRRRGPVRPKLRYAHQGGQNPPIIVIHGNALDAITETYKRYLENRFRETFKLTGTPLRIEFRSSTNPYADKG.

EngA-type G domains lie at 3–167 (PVIA…YAGQ) and 180–353 (VKIA…AAAM). GTP contacts are provided by residues 9 to 16 (GRPNVGKS), 56 to 60 (DTGGF), 119 to 122 (NKAE), 186 to 193 (GRPNVGKS), 233 to 237 (DTAGL), and 298 to 301 (NKWD). The region spanning 354–438 (AKLPTPKLTR…PLRIEFRSST (85 aa)) is the KH-like domain.

This sequence belongs to the TRAFAC class TrmE-Era-EngA-EngB-Septin-like GTPase superfamily. EngA (Der) GTPase family. As to quaternary structure, associates with the 50S ribosomal subunit.

Its function is as follows. GTPase that plays an essential role in the late steps of ribosome biogenesis. In Paraburkholderia phytofirmans (strain DSM 17436 / LMG 22146 / PsJN) (Burkholderia phytofirmans), this protein is GTPase Der.